The sequence spans 295 residues: Small ribosomal subunit protein uS2 (295 aa).

At Ser-2 the chain carries N-acetylserine. Position 43 is a phosphoserine (Ser-43). Lys-52 is subject to N6-acetyllysine. The interaction with PPP1R16B stretch occupies residues 54-113 (TWEKLLLAARAIVAIENPADVSVISSRNTGQRAVLKFAAATGATPIAGRFTPGTFTNQIQ). Lys-89 carries the post-translational modification N6-acetyllysine; alternate. A Glycyl lysine isopeptide (Lys-Gly) (interchain with G-Cter in SUMO2); alternate cross-link involves residue Lys-89. Phosphothreonine is present on Thr-97. Laminin-binding regions lie at residues 161-180 (IPCN…MLAR) and 205-229 (RDPE…EFQG). [DE]-W-[ST] repeat units lie at residues 230-232 (EWT), 247-249 (DWS), 266-268 (DWS), 275-277 (DWS), and 293-295 (EWS). Residues 242-295 (QPEVADWSEGVQVPSVPIQQFPTEDWSAQPTTEDWSAAPTAQATEWVGTTTEWS) form a laminin-binding region. The interval 266-295 (DWSAQPTTEDWSAAPTAQATEWVGTTTEWS) is disordered.

Belongs to the universal ribosomal protein uS2 family. Monomer (37LRP) and homodimer (67LR). Component of the small ribosomal subunit. Mature ribosomes consist of a small (40S) and a large (60S) subunit. The 40S subunit contains about 33 different proteins and 1 molecule of RNA (18S). The 60S subunit contains about 49 different proteins and 3 molecules of RNA (28S, 5.8S and 5S). Interacts with RPS21. Interacts with several laminins including at least LAMB1. Interacts with MDK. The mature dimeric form interacts with PPP1R16B (via its fourth ankyrin repeat). Interacts with PPP1CA only in the presence of PPP1R16B. Acylated. Acylation may be a prerequisite for conversion of the monomeric 37 kDa laminin receptor precursor (37LRP) to the mature dimeric 67 kDa laminin receptor (67LR), and may provide a mechanism for membrane association. In terms of processing, cleaved by stromelysin-3 (ST3) at the cell surface. Cleavage by stromelysin-3 may be a mechanism to alter cell-extracellular matrix interactions.

It is found in the cell membrane. The protein localises to the cytoplasm. Its subcellular location is the nucleus. In terms of biological role, required for the assembly and/or stability of the 40S ribosomal subunit. Required for the processing of the 20S rRNA-precursor to mature 18S rRNA in a late step of the maturation of 40S ribosomal subunits. Also functions as a cell surface receptor for laminin. Plays a role in cell adhesion to the basement membrane and in the consequent activation of signaling transduction pathways. May play a role in cell fate determination and tissue morphogenesis. Also acts as a receptor for several other ligands, including the pathogenic prion protein, viruses, and bacteria. Acts as a PPP1R16B-dependent substrate of PPP1CA. This is Small ribosomal subunit protein uS2 from Sus scrofa (Pig).